The primary structure comprises 479 residues: Adenosylhomocysteinase (479 aa).

Positions 66, 142, and 203 each coordinate substrate. An NAD(+)-binding site is contributed by 204–206 (TTT). 2 residues coordinate substrate: Lys233 and Asp237. Residues Asn238, 267-272 (GYGDVG), Glu290, Asn325, 346-348 (IGH), and Asn394 contribute to the NAD(+) site.

Belongs to the adenosylhomocysteinase family. NAD(+) is required as a cofactor.

The protein resides in the cytoplasm. It carries out the reaction S-adenosyl-L-homocysteine + H2O = L-homocysteine + adenosine. Its pathway is amino-acid biosynthesis; L-homocysteine biosynthesis; L-homocysteine from S-adenosyl-L-homocysteine: step 1/1. May play a key role in the regulation of the intracellular concentration of adenosylhomocysteine. The polypeptide is Adenosylhomocysteinase (Nitratidesulfovibrio vulgaris (strain ATCC 29579 / DSM 644 / CCUG 34227 / NCIMB 8303 / VKM B-1760 / Hildenborough) (Desulfovibrio vulgaris)).